A 249-amino-acid chain; its full sequence is Glucosamine-6-phosphate deaminase 2 (249 aa).

Residue Asp67 is the Proton acceptor; for enolization step of the active site. The For ring-opening step role is filled by Asn136. The active-site Proton acceptor; for ring-opening step is His138. Glu143 acts as the For ring-opening step in catalysis.

This sequence belongs to the glucosamine/galactosamine-6-phosphate isomerase family. NagB subfamily.

It carries out the reaction alpha-D-glucosamine 6-phosphate + H2O = beta-D-fructose 6-phosphate + NH4(+). It functions in the pathway amino-sugar metabolism; N-acetylneuraminate degradation; D-fructose 6-phosphate from N-acetylneuraminate: step 5/5. In terms of biological role, catalyzes the reversible isomerization-deamination of glucosamine 6-phosphate (GlcN6P) to form fructose 6-phosphate (Fru6P) and ammonium ion. Required for growth on glucosamine and also provides the majority of GlcN6P deaminase activity during growth on N-acetylglucosamine (GlcNAc). This Bacillus subtilis (strain 168) protein is Glucosamine-6-phosphate deaminase 2.